The chain runs to 146 residues: VHWTADEKQLITSLWGKVNVEECGSEALARLLIVYPWTQRFFSTFGNLSNAEAILHNPHVHAHGKKVLTSFGEAVKNLDHIKQTFATLSKLHCEKLHVDPENFKLLGNVLIIVLASHFTKEFTPACQAAWQKLVSAVAHALALGYH.

The Globin domain maps to 2-146 (HWTADEKQLI…VAHALALGYH (145 aa)). The heme b site is built by His63 and His92.

This sequence belongs to the globin family. In terms of assembly, heterotetramer of two alpha chains and two beta chains. As to expression, red blood cells.

Involved in oxygen transport from the lung to the various peripheral tissues. In Chrysemys picta bellii (Western painted turtle), this protein is Hemoglobin subunit beta (HBB).